The sequence spans 382 residues: Galactokinase (382 aa).

34-37 (EHTD) contacts substrate. 124-130 (GAGLSSS) is a binding site for ATP. Positions 130 and 162 each coordinate Mg(2+). Residue Asp-174 is the Proton acceptor of the active site. Tyr-223 lines the substrate pocket.

It belongs to the GHMP kinase family. GalK subfamily.

Its subcellular location is the cytoplasm. The enzyme catalyses alpha-D-galactose + ATP = alpha-D-galactose 1-phosphate + ADP + H(+). Its pathway is carbohydrate metabolism; galactose metabolism. In terms of biological role, catalyzes the transfer of the gamma-phosphate of ATP to D-galactose to form alpha-D-galactose-1-phosphate (Gal-1-P). This chain is Galactokinase, found in Shigella flexneri.